Here is a 129-residue protein sequence, read N- to C-terminus: Protein Turandot A1/2 (129 aa).

An N-terminal signal peptide occupies residues 1–21; the sequence is MNSSTALMCFALLLISPLCLG. An N-linked (GlcNAc...) asparagine glycan is attached at N49.

The protein belongs to the Turandot family.

It is found in the secreted. A humoral factor that plays a role in stress tolerance; gives increased resistance to the lethal effects of bacterial challenge and stress. Regulated by the JAK/STAT pathway and NF-KB-like Relish pathway in the fat body, upd3 in the hemocytes and Mekk1 in response to septic injury and consequent immune response. The sequence is that of Protein Turandot A1/2 (TotA1) from Drosophila sechellia (Fruit fly).